We begin with the raw amino-acid sequence, 790 residues long: Ice-structuring glycoprotein (790 aa).

Residues Val-1–Pro-5 constitute a propeptide that is removed on maturation.

O-glycosylated; contains disaccharide galactose-N-acetylgalactosamine attached to threonines in AFGP8 and AFGP7. Synthesized by the liver and secreted into the blood from which they become distributed to almost the entire extracellular space.

It localises to the secreted. Antifreeze proteins lower the blood freezing point. The protein is Ice-structuring glycoprotein (afgp8) of Notothenia neglecta (Yellowbelly rockcod).